The primary structure comprises 521 residues: MSDTEDLAALNDRLMAKNHALAEALSRAGKELTKAKSQLAQLAQPPLTFATMVKVDSTRTDEDGIQHASAEVISGTRRMVVPVASNVNAARLTAGATVMLNEKLVLVEQRDADTVGQIRSVKQVLDDGRLIVTDASGNPVLIRRSGALAYAGINQGDRIIVDPSVRLAIEALPAEGDKDLVLEETPDVTFADIGGLDSEIGRIRDAVQLPFQHRALFERYDLKPPKGVLLYGPPGNGKTMIAKAVANALCEGGYDTNGDGSISPAETHVKGVFLSVKGPELLNKYVGESERLIRLIFQRARERAADGNPVVVFIDEMDSLLRTRGSGVSSDVETTIVPQFLSELDGVESLDNVMVIGASNRVDMIDPAVLRPGRLDVKIRVGRPKTNQAIAIVDHYLTDDLPLEDGVDAHALSAVLVHDIYGTSERRHLCDVQEENGQWHALFLADVVSGAMLKNIVDRAKTRAVKESIETGLDVALTVPLLAAAVEDEYRETRDSMADVDPEQWSRINGMDPIRRIRTAE.

The stretch at threonine 4–glutamine 44 forms a coiled coil. Glycine 235–methionine 240 lines the ATP pocket.

It belongs to the AAA ATPase family. As to quaternary structure, homohexamer. Assembles into a hexameric ring structure.

The polypeptide is AAA ATPase forming ring-shaped complexes (Bifidobacterium longum (strain NCC 2705)).